The chain runs to 248 residues: Floral homeotic protein AGAMOUS (248 aa).

An MADS-box domain is found at 19–73 (RGKIEIKRIENTTNRQVTFCKRRNGLLKKAYELSVLCDAEVALIVFSSRGRLYEY). One can recognise a K-box domain in the interval 103–193 (AQYYQQEASK…RAKIAETERA (91 aa)). The interval 196–219 (QQQQQQMNLMPGSSSYELVPPPHQ) is disordered. The span at 202 to 211 (MNLMPGSSSY) shows a compositional bias: polar residues.

It is found in the nucleus. Probable transcription factor involved in regulating genes that determines stamen and carpel development in wild-type flowers. The chain is Floral homeotic protein AGAMOUS (AG1) from Nicotiana tabacum (Common tobacco).